A 135-amino-acid polypeptide reads, in one-letter code: Crossover junction endodeoxyribonuclease Hje (135 aa).

Residues glutamate 10, aspartate 39, and glutamate 52 each coordinate Mg(2+).

Belongs to the Holliday junction resolvase Hjc family. Hje subfamily. In terms of assembly, homodimer. The cofactor is Mg(2+).

The enzyme catalyses Endonucleolytic cleavage at a junction such as a reciprocal single-stranded crossover between two homologous DNA duplexes (Holliday junction).. A structure-specific endonuclease that resolves Holliday junction (HJ) intermediates during genetic recombination. Acts only on 4-way DNA junctions in a sequence non-specific manner; introduces paired nicks in opposing strands 2 bases 3' of the point of strand exchange only on continuous strands of 4-way junction DNA. Cleaves both mobile and immobile junctions. Plays a more direct role in DNA repair than Hjc. Overexpression of this protein decreases the growth rate, and leads to genomic instability, and global transcriptomic changes. The sequence is that of Crossover junction endodeoxyribonuclease Hje from Saccharolobus islandicus (strain REY15A) (Sulfolobus islandicus).